The primary structure comprises 231 residues: MEAAAKVQRQMVRLRGRSYVAFVFVPTVPILDWLQEIDATIARSPGFFAGRPVVIDLSSVDLSQSGINHLLTSLQDRNIRVLGIEGVEEGRLTPMMPPLLSGGRSCVVEPSAPKKVEKAEAKPTSLLLENPVRSGQTVIFPEGDVTILGSVGSGAEVVAGGSIHVYGALRGRAMAGVNGHTSARIYCQKIEAELLAIDGFYQTADDIDAALRGKPAQAWLQGNTMRITALN.

It belongs to the MinC family. As to quaternary structure, interacts with MinD and FtsZ.

Cell division inhibitor that blocks the formation of polar Z ring septums. Rapidly oscillates between the poles of the cell to destabilize FtsZ filaments that have formed before they mature into polar Z rings. Prevents FtsZ polymerization. The sequence is that of Probable septum site-determining protein MinC from Bradyrhizobium diazoefficiens (strain JCM 10833 / BCRC 13528 / IAM 13628 / NBRC 14792 / USDA 110).